The sequence spans 455 residues: MKDKYLTVTALTKYVKRKMDSDPHLRDIWLRGEISNFKHHSRGHMYLTIKDDSARIQAVMFASSNRKLLFHPENGMNVLIRGEISVFEAYGQYQLYIHEMEPDGIGSLYQAFEQLKERLHKQGYFADEYKKPIPRYPKNIAVITSPTGAAIRDILTTMKRRYPSVKITVFPVLVQGNQAKASIARSIQQADSLSYDVIIVGRGGGSIEELWSFNEEEVARAIFESKTPIISAVGHETDTTISDFVADLRAPTPTAAGELAVPSQVELLDKIEIQKRQLARLLKQYISQHETILHQLRQTYAFKYPHQLVKQKEQELDSTMDNLQRRMKSKVSDDKLTHNHLIKRLSSQHPQRELRLAIDKLRQLHSLQNKMMNNYLEQQSQRLYSQIDKLSLVNPLEIMKRGYALPYNEDGALIKSVKHLHINDTIQLRIADGEVTGKVTAIKEANENGNEGSNV.

It belongs to the XseA family. In terms of assembly, heterooligomer composed of large and small subunits.

Its subcellular location is the cytoplasm. The catalysed reaction is Exonucleolytic cleavage in either 5'- to 3'- or 3'- to 5'-direction to yield nucleoside 5'-phosphates.. In terms of biological role, bidirectionally degrades single-stranded DNA into large acid-insoluble oligonucleotides, which are then degraded further into small acid-soluble oligonucleotides. This Oceanobacillus iheyensis (strain DSM 14371 / CIP 107618 / JCM 11309 / KCTC 3954 / HTE831) protein is Exodeoxyribonuclease 7 large subunit.